The sequence spans 304 residues: N-acetylmuramic acid 6-phosphate etherase (304 aa).

The 164-residue stretch at 57 to 220 folds into the SIS domain; that stretch reads AVKGLSAGGR…STATMVGLGK (164 aa). Glu-85 serves as the catalytic Proton donor. Residue Glu-116 is part of the active site.

This sequence belongs to the GCKR-like family. MurNAc-6-P etherase subfamily. As to quaternary structure, homodimer.

It catalyses the reaction N-acetyl-D-muramate 6-phosphate + H2O = N-acetyl-D-glucosamine 6-phosphate + (R)-lactate. It functions in the pathway amino-sugar metabolism; N-acetylmuramate degradation. Its function is as follows. Specifically catalyzes the cleavage of the D-lactyl ether substituent of MurNAc 6-phosphate, producing GlcNAc 6-phosphate and D-lactate. This is N-acetylmuramic acid 6-phosphate etherase from Cutibacterium acnes (strain DSM 16379 / KPA171202) (Propionibacterium acnes).